The primary structure comprises 329 residues: Cathepsin K (329 aa).

The N-terminal stretch at 1–15 (MWGLKVLLLPVMSFA) is a signal peptide. Residues 16–114 (LYPEEILDTH…TLYIPDWEGR (99 aa)) constitute a propeptide, activation peptide. A glycan (N-linked (GlcNAc...) asparagine) is linked at asparagine 103. Intrachain disulfides connect cysteine 136-cysteine 177, cysteine 170-cysteine 210, and cysteine 269-cysteine 318. Cysteine 139 is an active-site residue. Active-site residues include histidine 276 and asparagine 296.

The protein belongs to the peptidase C1 family.

The protein localises to the lysosome. The protein resides in the secreted. It localises to the apical cell membrane. The enzyme catalyses Broad proteolytic activity. With small-molecule substrates and inhibitors, the major determinant of specificity is P2, which is preferably Leu, Met &gt; Phe, and not Arg.. In terms of biological role, thiol protease involved in osteoclastic bone resorption and may participate partially in the disorder of bone remodeling. Displays potent endoprotease activity against fibrinogen at acid pH. May play an important role in extracellular matrix degradation. Involved in the release of thyroid hormone thyroxine (T4) by limited proteolysis of TG/thyroglobulin in the thyroid follicle lumen. This Macaca fascicularis (Crab-eating macaque) protein is Cathepsin K (CTSK).